A 574-amino-acid polypeptide reads, in one-letter code: Glucose-6-phosphate 1-dehydrogenase, chloroplastic (574 aa).

NADP(+) is bound by residues 93-100 and R127; that span reads GASGDLAK. C145 and C153 form a disulfide bridge. K230 provides a ligand contact to NADP(+). D-glucose 6-phosphate is bound by residues K230, 260 to 264, E298, and D317; that span reads HYLGK. H322 acts as the Proton acceptor in catalysis. NADP(+) is bound at residue K415. K418 and K423 together coordinate D-glucose 6-phosphate. The NADP(+) site is built by R424, R428, and R457. A D-glucose 6-phosphate-binding site is contributed by Q459. NADP(+)-binding positions include 465 to 467 and R550; that span reads YLK.

Belongs to the glucose-6-phosphate dehydrogenase family. In terms of assembly, homodimer.

It localises to the plastid. It is found in the chloroplast. The catalysed reaction is D-glucose 6-phosphate + NADP(+) = 6-phospho-D-glucono-1,5-lactone + NADPH + H(+). Its pathway is carbohydrate degradation; pentose phosphate pathway; D-ribulose 5-phosphate from D-glucose 6-phosphate (oxidative stage): step 1/3. Regulated by metabolites. Post-translationally inactivated by cysteine-mediated redox modification via the ferredoxin-thioredoxin system in the light and this avoids futile cycles with photosynthetic CO2 fixation. Catalyzes the rate-limiting step of the oxidative pentose-phosphate pathway, which represents a route for the dissimilation of carbohydrates besides glycolysis. The main function of this enzyme is to provide reducing power (NADPH) and pentose phosphates for fatty acid and nucleic acid synthesis which are involved in membrane synthesis and cell division. The protein is Glucose-6-phosphate 1-dehydrogenase, chloroplastic (G6PD) of Spinacia oleracea (Spinach).